The sequence spans 502 residues: MDLLLFIFFLILFYYSVKYYKADNQNSLSLSGPTPVPILGNIHQVGKDAHLTIPIISKKYHGIFRMWLGGTYYVVVSDYKLIREMYIENFENFKNRIATFKTMTGDDSRGIIGCNGDIWDSNKELIMKSYKKVLNKDMNDFILLKSKELFNFFEKNGIKNEEEEDDDDDGNKSIIINNTRFYFQSLTLTVMFKMIFNENKSFQLYSDSTEFKLIFKTILNLLNSLNVYNVIYDFLGIFQPILLKFTKILDKNSFLSKIATEKFNSRIKEIDFTSDDFKANDLLDSLIMTINEDENGLNEKQIENIKSICIDFLMAGTDTTGSTIEWIILKLVNNPEFQELIFQELKKLNKSEITANDKINTPFLNSFIKETNRLYPIAPLSLPRKSINEMIIGDNKYYIPANTNILMDVKGFSLDENNYKDPNEFKPDRFLNSKVSDTLNFGIGPRNCIGQTIAMNQIHIFLSNLILNYRMFSIDCLPLPENLILSVSVRPTEYSLKLIKRV.

The helical transmembrane segment at 3-20 (LLLFIFFLILFYYSVKYY) threads the bilayer. Cysteine 448 contacts heme.

It belongs to the cytochrome P450 family. Heme serves as cofactor.

The protein localises to the membrane. The polypeptide is Probable cytochrome P450 554A1 (cyp554A1) (Dictyostelium discoideum (Social amoeba)).